Reading from the N-terminus, the 289-residue chain is Alpha-soluble NSF attachment protein (289 aa).

Residues 112–145 form a TPR repeat; that stretch reads GKYYKEIAELYELEQNFEQAIIYFEKAADIYQSE.

This sequence belongs to the SNAP family.

Its subcellular location is the membrane. Functionally, required for vesicular transport between the endoplasmic reticulum and the Golgi apparatus. The polypeptide is Alpha-soluble NSF attachment protein (Vitis vinifera (Grape)).